The following is a 269-amino-acid chain: 3-methyl-2-oxobutanoate hydroxymethyltransferase (269 aa).

Residues Asp-49 and Asp-88 each coordinate Mg(2+). 3-methyl-2-oxobutanoate contacts are provided by residues 49–50 (DS), Asp-88, and Lys-118. Glu-120 contributes to the Mg(2+) binding site. The active-site Proton acceptor is the Glu-186.

Belongs to the PanB family. Homodecamer; pentamer of dimers. Mg(2+) is required as a cofactor.

The protein resides in the cytoplasm. It catalyses the reaction 3-methyl-2-oxobutanoate + (6R)-5,10-methylene-5,6,7,8-tetrahydrofolate + H2O = 2-dehydropantoate + (6S)-5,6,7,8-tetrahydrofolate. The protein operates within cofactor biosynthesis; (R)-pantothenate biosynthesis; (R)-pantoate from 3-methyl-2-oxobutanoate: step 1/2. Its function is as follows. Catalyzes the reversible reaction in which hydroxymethyl group from 5,10-methylenetetrahydrofolate is transferred onto alpha-ketoisovalerate to form ketopantoate. This is 3-methyl-2-oxobutanoate hydroxymethyltransferase from Pelobacter propionicus (strain DSM 2379 / NBRC 103807 / OttBd1).